The sequence spans 480 residues: Ribulose bisphosphate carboxylase large chain (480 aa).

A propeptide spanning residues 1–2 (MS) is cleaved from the precursor. Position 3 is an N-acetylproline (proline 3). At lysine 14 the chain carries N6,N6,N6-trimethyllysine. The substrate site is built by asparagine 123 and threonine 173. Residue lysine 175 is the Proton acceptor of the active site. Lysine 177 is a substrate binding site. 3 residues coordinate Mg(2+): lysine 201, aspartate 203, and glutamate 204. Lysine 201 bears the N6-carboxylysine mark. The active-site Proton acceptor is histidine 294. Residues arginine 295, histidine 327, and serine 379 each coordinate substrate.

It belongs to the RuBisCO large chain family. Type I subfamily. As to quaternary structure, heterohexadecamer of 8 large chains and 8 small chains; disulfide-linked. The disulfide link is formed within the large subunit homodimers. Mg(2+) serves as cofactor. Post-translationally, the disulfide bond which can form in the large chain dimeric partners within the hexadecamer appears to be associated with oxidative stress and protein turnover.

It localises to the plastid. Its subcellular location is the chloroplast. It carries out the reaction 2 (2R)-3-phosphoglycerate + 2 H(+) = D-ribulose 1,5-bisphosphate + CO2 + H2O. It catalyses the reaction D-ribulose 1,5-bisphosphate + O2 = 2-phosphoglycolate + (2R)-3-phosphoglycerate + 2 H(+). Functionally, ruBisCO catalyzes two reactions: the carboxylation of D-ribulose 1,5-bisphosphate, the primary event in carbon dioxide fixation, as well as the oxidative fragmentation of the pentose substrate in the photorespiration process. Both reactions occur simultaneously and in competition at the same active site. The protein is Ribulose bisphosphate carboxylase large chain of Alluaudia procera (Madagascan ocotillo).